A 79-amino-acid chain; its full sequence is MVPPGNILFLLLLPVATAQMTPGSCSGCGPLSLPLLAGLVAADAVVSLLIVVVVFVCARLRSRPTQEDDKIYINMPGRG.

A signal peptide spans 1–18 (MVPPGNILFLLLLPVATA). The Extracellular segment spans residues 19–35 (QMTPGSCSGCGPLSLPL). A helical transmembrane segment spans residues 36 to 56 (LAGLVAADAVVSLLIVVVVFV). Residues 57 to 79 (CARLRSRPTQEDDKIYINMPGRG) are Cytoplasmic-facing. The residue at position 72 (Tyr72) is a Phosphotyrosine. The GRB2 binding site stretch occupies residues 72-74 (YIN). Positions 72–75 (YINM) are PIK3R1 binding site.

This sequence belongs to the DAP10 family. In terms of assembly, homodimer; Disulfide-linked. Heterohexamer composed of four subunits of HCST/DAP10 and two subunits of KLRK1. Interacts (via transmembrane domain) with KLRK1 (via transmembrane domain); the interaction is required for KLRK1 NK cell surface and induces NK cell-mediated cytotoxicity. Interacts with PIK3R1 and GRB2. Interacts with CLEC5A. Forms an CLEC5A/TYROBP/HCST trimolecular complex depending almost solely on TYROBP. Interacts with KLRK1. Interacts with CD300H. Post-translationally, phosphorylated; PIK3R1 and GRB2 associate specifically with tyrosine-phosphorylated HCST. In terms of processing, O-glycosylated.

The protein localises to the membrane. Functionally, transmembrane adapter protein which associates with KLRK1 to form an activation receptor KLRK1-HCST in lymphoid and myeloid cells; this receptor plays a major role in triggering cytotoxicity against target cells expressing cell surface ligands such as MHC class I chain-related MICA and MICB, and UL16-binding proteins (ULBPs); these ligands are up-regulated by stress conditions and pathological state such as viral infection and tumor transformation. Functions as a docking site for PI3-kinase PIK3R1 and GRB2. Interaction of ULBPs with KLRK1-HCST triggers calcium mobilization and activation of the PIK3R1, MAP2K/ERK, and JAK2/STAT5 signaling pathways. Both PIK3R1 and GRB2 are required for full KLRK1-HCST-mediated activation and ultimate killing of target cells. In NK cells, KLRK1-HCST signaling directly induces cytotoxicity and enhances cytokine production initiated via DAP12/TYROBP-associated receptors. In T-cells, it provides primarily costimulation for TCR-induced signals. KLRK1-HCST receptor plays a role in immune surveillance against tumors and is required for cytolysis of tumors cells; indeed, melanoma cells that do not express KLRK1 ligands escape from immune surveillance mediated by NK cells. The polypeptide is Hematopoietic cell signal transducer (HCST) (Bos taurus (Bovine)).